A 472-amino-acid polypeptide reads, in one-letter code: Carboxypeptidase Q (472 aa).

An N-terminal signal peptide occupies residues 1-20 (MKFLIFAFFGGVHLLSLCSG). The propeptide occupies 21–44 (KAICKNGISKRTFEEIKEEIASCG). Asn-61 and Asn-179 each carry an N-linked (GlcNAc...) asparagine glycan. 2 residues coordinate Zn(2+): His-290 and Asp-302. The Nucleophile role is filled by Glu-336. Glu-337 is a binding site for Zn(2+). 2 N-linked (GlcNAc...) asparagine glycosylation sites follow: Asn-353 and Asn-356. Residue Asp-364 coordinates Zn(2+). N-linked (GlcNAc...) asparagine glycosylation is present at Asn-396. His-434 is a Zn(2+) binding site.

The protein belongs to the peptidase M28 family. In terms of assembly, homodimer. The monomeric form is inactive while the homodimer is active. Post-translationally, N-glycosylated. The secreted form is modified by hybrid or complex type oligosaccharide chains. In terms of tissue distribution, mainly detected in blood plasma. Abundant in placenta and kidney. Present at low level in muscles, liver and skin fibroblasts. Not detected in brain or white blood cells (at protein level).

The protein resides in the endoplasmic reticulum. It is found in the golgi apparatus. It localises to the lysosome. Its subcellular location is the secreted. In terms of biological role, carboxypeptidase that may play an important role in the hydrolysis of circulating peptides. Catalyzes the hydrolysis of dipeptides with unsubstituted terminals into amino acids. May play a role in the liberation of thyroxine hormone from its thyroglobulin (Tg) precursor. In Homo sapiens (Human), this protein is Carboxypeptidase Q (CPQ).